A 124-amino-acid chain; its full sequence is Small ribosomal subunit protein uS12c (124 aa).

The tract at residues 1–28 (MPTFQQLVRSARKPHAKKTKSPALQGCP) is disordered. Positions 10–20 (SARKPHAKKTK) are enriched in basic residues.

The protein belongs to the universal ribosomal protein uS12 family. Part of the 30S ribosomal subunit.

The protein localises to the plastid. Functionally, with S4 and S5 plays an important role in translational accuracy. Located at the interface of the 30S and 50S subunits. The chain is Small ribosomal subunit protein uS12c (rps12) from Prototheca wickerhamii.